The primary structure comprises 308 residues: Porphobilinogen deaminase (308 aa).

S-(dipyrrolylmethanemethyl)cysteine is present on cysteine 240.

It belongs to the HMBS family. In terms of assembly, monomer. Requires dipyrromethane as cofactor.

It catalyses the reaction 4 porphobilinogen + H2O = hydroxymethylbilane + 4 NH4(+). It participates in porphyrin-containing compound metabolism; protoporphyrin-IX biosynthesis; coproporphyrinogen-III from 5-aminolevulinate: step 2/4. Its function is as follows. Tetrapolymerization of the monopyrrole PBG into the hydroxymethylbilane pre-uroporphyrinogen in several discrete steps. The sequence is that of Porphobilinogen deaminase from Maridesulfovibrio salexigens (strain ATCC 14822 / DSM 2638 / NCIMB 8403 / VKM B-1763) (Desulfovibrio salexigens).